The following is a 170-amino-acid chain: 2S seed storage protein 2 (170 aa).

Residues 1 to 21 (MANKLFLVCATFALCFLLTNA) form the signal peptide. 2 consecutive propeptides follow at residues 22–37 (SIYRTVVEFDEDDASN) and 73–88 (GPSLDDEFDLEDDIEN).

This sequence belongs to the 2S seed storage albumins family. As to quaternary structure, the mature protein consists of a small and a large chain linked by disulfide bonds.

Its function is as follows. This is a 2S seed storage protein. This is 2S seed storage protein 2 (AT2S2) from Arabidopsis thaliana (Mouse-ear cress).